A 416-amino-acid chain; its full sequence is Diaminobutyrate--2-oxoglutarate transaminase (416 aa).

Lys263 carries the N6-(pyridoxal phosphate)lysine modification.

This sequence belongs to the class-III pyridoxal-phosphate-dependent aminotransferase family. It depends on pyridoxal 5'-phosphate as a cofactor.

It carries out the reaction L-2,4-diaminobutanoate + 2-oxoglutarate = L-aspartate 4-semialdehyde + L-glutamate. Its pathway is amine and polyamine biosynthesis; ectoine biosynthesis; L-ectoine from L-aspartate 4-semialdehyde: step 1/3. Its function is as follows. Catalyzes reversively the conversion of L-aspartate beta-semialdehyde (ASA) to L-2,4-diaminobutyrate (DABA) by transamination with L-glutamate. The polypeptide is Diaminobutyrate--2-oxoglutarate transaminase (ectB) (Virgibacillus pantothenticus).